Reading from the N-terminus, the 290-residue chain is AA9 family lytic polysaccharide monooxygenase A (290 aa).

The N-terminal stretch at 1 to 17 (MKLSLLASVALVPFVSA) is a signal peptide. Residues histidine 18 and histidine 101 each coordinate Cu(2+). Cysteine 67 and cysteine 189 form a disulfide bridge. Residue histidine 176 coordinates O2. Tyrosine 187 lines the Cu(2+) pocket. N-linked (GlcNAc...) asparagine glycans are attached at residues asparagine 220 and asparagine 254. Residues 240-290 (GGSGSGSSSYSKVANVTSSDESSQSGASSSQGTVSTCPNKYNRRHARQFKP) are disordered. Over residues 245–275 (GSSSYSKVANVTSSDESSQSGASSSQGTVST) the composition is skewed to low complexity. Positions 280-290 (YNRRHARQFKP) are enriched in basic residues.

Belongs to the polysaccharide monooxygenase AA9 family. Cu(2+) serves as cofactor.

It is found in the secreted. It carries out the reaction [(1-&gt;4)-beta-D-glucosyl]n+m + reduced acceptor + O2 = 4-dehydro-beta-D-glucosyl-[(1-&gt;4)-beta-D-glucosyl]n-1 + [(1-&gt;4)-beta-D-glucosyl]m + acceptor + H2O.. Lytic polysaccharide monooxygenase (LPMO) that depolymerizes crystalline and amorphous polysaccharides via the oxidation of scissile alpha- or beta-(1-4)-glycosidic bonds, yielding exclusively C1 oxidation products. Catalysis by LPMOs requires the reduction of the active-site copper from Cu(II) to Cu(I) by a reducing agent and H(2)O(2) or O(2) as a cosubstrate. The chain is AA9 family lytic polysaccharide monooxygenase A from Aspergillus fumigatus (strain ATCC MYA-4609 / CBS 101355 / FGSC A1100 / Af293) (Neosartorya fumigata).